A 205-amino-acid polypeptide reads, in one-letter code: Holliday junction branch migration complex subunit RuvA (205 aa).

Residues 1–64 (MIGRLSGILV…EDAQLLYGFI (64 aa)) are domain I. Residues 65–143 (TKQERALFRL…SLLEASAGSE (79 aa)) are domain II. The tract at residues 144–156 (REFMLQSNYTPAA) is flexible linker. Residues 157 to 205 (AVDSAEEDAISALLSLGYKPAQASKSVSAAFKEGMSSETLIKAALKSML) are domain III.

It belongs to the RuvA family. Homotetramer. Forms an RuvA(8)-RuvB(12)-Holliday junction (HJ) complex. HJ DNA is sandwiched between 2 RuvA tetramers; dsDNA enters through RuvA and exits via RuvB. An RuvB hexamer assembles on each DNA strand where it exits the tetramer. Each RuvB hexamer is contacted by two RuvA subunits (via domain III) on 2 adjacent RuvB subunits; this complex drives branch migration. In the full resolvosome a probable DNA-RuvA(4)-RuvB(12)-RuvC(2) complex forms which resolves the HJ.

It localises to the cytoplasm. The RuvA-RuvB-RuvC complex processes Holliday junction (HJ) DNA during genetic recombination and DNA repair, while the RuvA-RuvB complex plays an important role in the rescue of blocked DNA replication forks via replication fork reversal (RFR). RuvA specifically binds to HJ cruciform DNA, conferring on it an open structure. The RuvB hexamer acts as an ATP-dependent pump, pulling dsDNA into and through the RuvAB complex. HJ branch migration allows RuvC to scan DNA until it finds its consensus sequence, where it cleaves and resolves the cruciform DNA. The chain is Holliday junction branch migration complex subunit RuvA from Shewanella frigidimarina (strain NCIMB 400).